A 96-amino-acid polypeptide reads, in one-letter code: Small ribosomal subunit protein bS18 (96 aa).

The protein belongs to the bacterial ribosomal protein bS18 family. In terms of assembly, part of the 30S ribosomal subunit. Forms a tight heterodimer with protein bS6.

Functionally, binds as a heterodimer with protein bS6 to the central domain of the 16S rRNA, where it helps stabilize the platform of the 30S subunit. This chain is Small ribosomal subunit protein bS18, found in Borrelia garinii subsp. bavariensis (strain ATCC BAA-2496 / DSM 23469 / PBi) (Borreliella bavariensis).